A 235-amino-acid chain; its full sequence is Glucosamine-6-phosphate deaminase (235 aa).

Catalysis depends on D62, which acts as the Proton acceptor; for enolization step. The For ring-opening step role is filled by N128. Catalysis depends on H130, which acts as the Proton acceptor; for ring-opening step. E135 serves as the catalytic For ring-opening step.

Belongs to the glucosamine/galactosamine-6-phosphate isomerase family. NagB subfamily.

The enzyme catalyses alpha-D-glucosamine 6-phosphate + H2O = beta-D-fructose 6-phosphate + NH4(+). It participates in amino-sugar metabolism; N-acetylneuraminate degradation; D-fructose 6-phosphate from N-acetylneuraminate: step 5/5. Catalyzes the reversible isomerization-deamination of glucosamine 6-phosphate (GlcN6P) to form fructose 6-phosphate (Fru6P) and ammonium ion. This chain is Glucosamine-6-phosphate deaminase, found in Streptococcus sanguinis (strain SK36).